The chain runs to 874 residues: Alanine--tRNA ligase (874 aa).

Residues H563, H567, C665, and H669 each coordinate Zn(2+).

Belongs to the class-II aminoacyl-tRNA synthetase family. The cofactor is Zn(2+).

It is found in the cytoplasm. The enzyme catalyses tRNA(Ala) + L-alanine + ATP = L-alanyl-tRNA(Ala) + AMP + diphosphate. Catalyzes the attachment of alanine to tRNA(Ala) in a two-step reaction: alanine is first activated by ATP to form Ala-AMP and then transferred to the acceptor end of tRNA(Ala). Also edits incorrectly charged Ser-tRNA(Ala) and Gly-tRNA(Ala) via its editing domain. This chain is Alanine--tRNA ligase, found in Haemophilus influenzae (strain ATCC 51907 / DSM 11121 / KW20 / Rd).